Consider the following 209-residue polypeptide: Redox-sensing transcriptional repressor Rex (209 aa).

The H-T-H motif DNA-binding region spans leucine 16 to phenylalanine 55. Glycine 90 to glycine 95 lines the NAD(+) pocket.

It belongs to the transcriptional regulatory Rex family. Homodimer.

The protein localises to the cytoplasm. Functionally, modulates transcription in response to changes in cellular NADH/NAD(+) redox state. This is Redox-sensing transcriptional repressor Rex from Bacillus cytotoxicus (strain DSM 22905 / CIP 110041 / 391-98 / NVH 391-98).